Consider the following 437-residue polypeptide: Ribosomal protein uS12 methylthiotransferase RimO (437 aa).

Positions N9–K128 constitute an MTTase N-terminal domain. 6 residues coordinate [4Fe-4S] cluster: C18, C57, C91, C152, C156, and C159. Positions T138 to D368 constitute a Radical SAM core domain. One can recognise a TRAM domain in the interval Q371 to A437.

This sequence belongs to the methylthiotransferase family. RimO subfamily. It depends on [4Fe-4S] cluster as a cofactor.

It is found in the cytoplasm. It catalyses the reaction L-aspartate(89)-[ribosomal protein uS12]-hydrogen + (sulfur carrier)-SH + AH2 + 2 S-adenosyl-L-methionine = 3-methylsulfanyl-L-aspartate(89)-[ribosomal protein uS12]-hydrogen + (sulfur carrier)-H + 5'-deoxyadenosine + L-methionine + A + S-adenosyl-L-homocysteine + 2 H(+). In terms of biological role, catalyzes the methylthiolation of an aspartic acid residue of ribosomal protein uS12. This chain is Ribosomal protein uS12 methylthiotransferase RimO, found in Flavobacterium johnsoniae (strain ATCC 17061 / DSM 2064 / JCM 8514 / BCRC 14874 / CCUG 350202 / NBRC 14942 / NCIMB 11054 / UW101) (Cytophaga johnsonae).